The following is a 205-amino-acid chain: Protein Nef (205 aa).

A lipid anchor (N-myristoyl glycine; by host) is attached at Gly-2. Position 6 is a phosphoserine; by host (Ser-6). The segment at 62–65 (EEEE) is acidic; interacts with host PACS1 and PACS2; stabilizes the interaction of NEF/MHC-I with host AP1M1; necessary for MHC-I internalization. The interval 69–78 (PVTPQVPLRP) is SH3-binding; interaction with Src family tyrosine kinases. Positions 72–75 (PQVP) match the PxxP; stabilizes the interaction of NEF/MHC-I with host AP1M1; necessary for MHC-I internalization motif. The segment at 108–124 (DILDLWIHHTQGYFPDW) is mediates dimerization, Nef-PTE1 interaction. Positions 148-179 (VEPEKEEANKGENTSLLHPVSLHGMDDPEREV) are binding to ATP6V1H. The Dileucine internalization motif; necessary for CD4 internalization motif lies at 163-164 (LL). The Diacidic; necessary for CD4 internalization signature appears at 173 to 174 (DD).

The protein belongs to the lentivirus primate group Nef protein family. In terms of assembly, monomer; cytosolic form. Homodimer; membrane bound form. Interacts with Nef associated p21-activated kinase (PAK2); this interaction activates PAK2. Associates with the Nef-MHC-I-AP1 complex; this complex is required for MHC-I internalization. Interacts (via C-terminus) with host PI3-kinase. Interacts with host PACS1; this interaction seems to be weak. Interacts with host PACS2. Interacts with host LCK and MAPK3; these interactions inhibit the kinase activity of the latter. Interacts with host ATP6V1H; this interaction may play a role in CD4 endocytosis. Associates with the CD4-Nef-AP2 complex; this complex is required for CD4 internalization. Interacts with host AP2 subunit alpha and AP2 subunit sigma2. Interacts with TCR-zeta chain; this interaction up-regulates the Fas ligand (FasL) surface expression. Interacts with host HCK, LYN, and SRC; these interactions activate the Src family kinases. Interacts with MAP3K5; this interaction inhibits the Fas and TNFR-mediated death signals. Interacts with beta-COP and PTE1. Interacts with human RACK1; this increases Nef phosphorylation by PKC. Interacts with TP53; this interaction decreases the half-life of TP53, protecting the infected cell against p53-mediated apoptosis. The virion-associated Nef proteins are cleaved by the viral protease to release the soluble C-terminal core protein. Nef is probably cleaved concomitantly with viral structural proteins on maturation of virus particles. Post-translationally, myristoylated. In terms of processing, phosphorylated on serine residues, probably by host PKCdelta and theta.

Its subcellular location is the host cell membrane. It is found in the virion. The protein resides in the secreted. It localises to the host Golgi apparatus membrane. Its function is as follows. Factor of infectivity and pathogenicity, required for optimal virus replication. Alters numerous pathways of T-lymphocyte function and down-regulates immunity surface molecules in order to evade host defense and increase viral infectivity. Alters the functionality of other immunity cells, like dendritic cells, monocytes/macrophages and NK cells. Functionally, in infected CD4(+) T-lymphocytes, down-regulates the surface MHC-I, mature MHC-II, CD4, CD28, CCR5 and CXCR4 molecules. Mediates internalization and degradation of host CD4 through the interaction of with the cytoplasmic tail of CD4, the recruitment of AP-2 (clathrin adapter protein complex 2), internalization through clathrin coated pits, and subsequent transport to endosomes and lysosomes for degradation. Diverts host MHC-I molecules to the trans-Golgi network-associated endosomal compartments by an endocytic pathway to finally target them for degradation. MHC-I down-regulation may involve AP-1 (clathrin adapter protein complex 1) or possibly Src family kinase-ZAP70/Syk-PI3K cascade recruited by PACS2. In consequence infected cells are masked for immune recognition by cytotoxic T-lymphocytes. Decreasing the number of immune receptors also prevents reinfection by more HIV particles (superinfection). Down-regulates host SERINC3 and SERINC5 thereby excluding these proteins from the viral particles. Virion infectivity is drastically higher when SERINC3 or SERINC5 are excluded from the viral envelope, because these host antiviral proteins impair the membrane fusion event necessary for subsequent virion penetration. In terms of biological role, bypasses host T-cell signaling by inducing a transcriptional program nearly identical to that of anti-CD3 cell activation. Interaction with TCR-zeta chain up-regulates the Fas ligand (FasL). Increasing surface FasL molecules and decreasing surface MHC-I molecules on infected CD4(+) cells send attacking cytotoxic CD8+ T-lymphocytes into apoptosis. Plays a role in optimizing the host cell environment for viral replication without causing cell death by apoptosis. Protects the infected cells from apoptosis in order to keep them alive until the next virus generation is ready to strike. Inhibits the Fas and TNFR-mediated death signals by blocking MAP3K5/ASK1. Decreases the half-life of TP53, protecting the infected cell against p53-mediated apoptosis. Inhibits the apoptotic signals regulated by the Bcl-2 family proteins through the formation of a Nef/PI3-kinase/PAK2 complex that leads to activation of PAK2 and induces phosphorylation of host BAD. Its function is as follows. Extracellular Nef protein targets CD4(+) T-lymphocytes for apoptosis by interacting with CXCR4 surface receptors. The chain is Protein Nef from Homo sapiens (Human).